The following is a 385-amino-acid chain: Serpin-Z10 (385 aa).

The interval 333–357 is RCL; the sequence is GTEAAAVSVGVVSCTSFRRNPDFVA.

Belongs to the serpin family.

Probable serine protease inhibitor. The protein is Serpin-Z10 of Arabidopsis thaliana (Mouse-ear cress).